The sequence spans 274 residues: Large ribosomal subunit protein uL2 (274 aa).

Disordered regions lie at residues 40–59 (SGGRNNLGRVTRRHQGGGHK) and 223–274 (VAMN…RRSR). Composition is skewed to basic residues over residues 49–59 (VTRRHQGGGHK) and 256–274 (YRTRRNKRTSNMIVRRRSR).

The protein belongs to the universal ribosomal protein uL2 family. As to quaternary structure, part of the 50S ribosomal subunit. Forms a bridge to the 30S subunit in the 70S ribosome.

One of the primary rRNA binding proteins. Required for association of the 30S and 50S subunits to form the 70S ribosome, for tRNA binding and peptide bond formation. It has been suggested to have peptidyltransferase activity; this is somewhat controversial. Makes several contacts with the 16S rRNA in the 70S ribosome. The protein is Large ribosomal subunit protein uL2 of Acidithiobacillus ferrooxidans (strain ATCC 23270 / DSM 14882 / CIP 104768 / NCIMB 8455) (Ferrobacillus ferrooxidans (strain ATCC 23270)).